Reading from the N-terminus, the 131-residue chain is ATP synthase epsilon chain, chloroplastic (131 aa).

It belongs to the ATPase epsilon chain family. F-type ATPases have 2 components, CF(1) - the catalytic core - and CF(0) - the membrane proton channel. CF(1) has five subunits: alpha(3), beta(3), gamma(1), delta(1), epsilon(1). CF(0) has three main subunits: a, b and c.

The protein resides in the plastid. It is found in the chloroplast thylakoid membrane. In terms of biological role, produces ATP from ADP in the presence of a proton gradient across the membrane. This Oltmannsiellopsis viridis (Marine flagellate) protein is ATP synthase epsilon chain, chloroplastic.